The primary structure comprises 745 residues: Polyribonucleotide nucleotidyltransferase (745 aa).

2 residues coordinate Mg(2+): Asp-487 and Asp-493. Residues 554-613 (PSTTTIKIDKDKIRDIIGPGGKVIKEICEISGAKIDISDDGTVSIYASDRDKLKVALDKI) form the KH domain. Residues 623-691 (GEIFNGTVMK…NKGKAKLTIK (69 aa)) enclose the S1 motif domain. A disordered region spans residues 691–745 (KNADKDKSSNNTKPKTNAKDNSEPEQRRDSSKKRAWNEDNNAETAEVITERKYFN). Positions 707–719 (NAKDNSEPEQRRD) are enriched in basic and acidic residues.

The protein belongs to the polyribonucleotide nucleotidyltransferase family. Requires Mg(2+) as cofactor.

The protein resides in the cytoplasm. The catalysed reaction is RNA(n+1) + phosphate = RNA(n) + a ribonucleoside 5'-diphosphate. In terms of biological role, involved in mRNA degradation. Catalyzes the phosphorolysis of single-stranded polyribonucleotides processively in the 3'- to 5'-direction. The chain is Polyribonucleotide nucleotidyltransferase from Rickettsia massiliae (strain Mtu5).